The primary structure comprises 101 residues: Small ribosomal subunit protein uS14 (101 aa).

This sequence belongs to the universal ribosomal protein uS14 family. As to quaternary structure, part of the 30S ribosomal subunit. Contacts proteins S3 and S10.

In terms of biological role, binds 16S rRNA, required for the assembly of 30S particles and may also be responsible for determining the conformation of the 16S rRNA at the A site. In Methylobacterium sp. (strain 4-46), this protein is Small ribosomal subunit protein uS14.